The sequence spans 708 residues: tRNA 5-methylaminomethyl-2-thiouridine biosynthesis bifunctional protein MnmC (708 aa).

Residues 1-278 (MTAEPNKPCQ…ERQVLRQQDA (278 aa)) form a tRNA (mnm(5)s(2)U34)-methyltransferase region. Residues 301–708 (IGGGLASAHL…LRKLLKGKAL (408 aa)) are FAD-dependent cmnm(5)s(2)U34 oxidoreductase.

It in the N-terminal section; belongs to the methyltransferase superfamily. tRNA (mnm(5)s(2)U34)-methyltransferase family. In the C-terminal section; belongs to the DAO family. The cofactor is FAD.

It is found in the cytoplasm. The enzyme catalyses 5-aminomethyl-2-thiouridine(34) in tRNA + S-adenosyl-L-methionine = 5-methylaminomethyl-2-thiouridine(34) in tRNA + S-adenosyl-L-homocysteine + H(+). Functionally, catalyzes the last two steps in the biosynthesis of 5-methylaminomethyl-2-thiouridine (mnm(5)s(2)U) at the wobble position (U34) in tRNA. Catalyzes the FAD-dependent demodification of cmnm(5)s(2)U34 to nm(5)s(2)U34, followed by the transfer of a methyl group from S-adenosyl-L-methionine to nm(5)s(2)U34, to form mnm(5)s(2)U34. The chain is tRNA 5-methylaminomethyl-2-thiouridine biosynthesis bifunctional protein MnmC from Shewanella baltica (strain OS195).